Consider the following 343-residue polypeptide: GTPase Obg (343 aa).

One can recognise an Obg domain in the interval 1-159; it reads MKFLDQAKIY…RWVWLRLKLI (159 aa). Positions 160 to 328 constitute an OBG-type G domain; it reads ADAGLVGLPN…LLRQVMTYVA (169 aa). Residues 166–173, 191–195, 213–216, 280–283, and 309–311 each bind GTP; these read GLPNAGKS, FTTLH, DIPG, NKCD, and SGV. S173 and T193 together coordinate Mg(2+).

Belongs to the TRAFAC class OBG-HflX-like GTPase superfamily. OBG GTPase family. As to quaternary structure, monomer. The cofactor is Mg(2+).

The protein localises to the cytoplasm. Its function is as follows. An essential GTPase which binds GTP, GDP and possibly (p)ppGpp with moderate affinity, with high nucleotide exchange rates and a fairly low GTP hydrolysis rate. Plays a role in control of the cell cycle, stress response, ribosome biogenesis and in those bacteria that undergo differentiation, in morphogenesis control. This Granulibacter bethesdensis (strain ATCC BAA-1260 / CGDNIH1) protein is GTPase Obg.